We begin with the raw amino-acid sequence, 324 residues long: Probable non-intrinsic ABC protein 5 (324 aa).

The 110-residue stretch at 2–111 (DRERYDKVIE…ADLTLVMKDG (110 aa)) folds into the ABC transporter domain. The next 2 membrane-spanning stretches (helical) occupy residues 212–232 (YITL…QILF) and 259–279 (LSTL…CILV). In terms of domain architecture, ABC transmembrane type-1 spans 222 to 324 (VPFILLGQIL…TCSKTCIYSS (103 aa)).

This sequence belongs to the ABC transporter superfamily.

The protein localises to the membrane. This is Probable non-intrinsic ABC protein 5 (NAP5) from Arabidopsis thaliana (Mouse-ear cress).